The chain runs to 31 residues: U8-ctenitoxin-Co1a (31 aa).

Cystine bridges form between Cys4/Cys18 and Cys11/Cys24.

Expressed by the venom gland.

The protein localises to the secreted. Its function is as follows. Blocks voltage-gated sodium channels (Nav). The polypeptide is U8-ctenitoxin-Co1a (Ctenus ornatus (Brazilian spider)).